Here is a 237-residue protein sequence, read N- to C-terminus: Ribosomal RNA small subunit methyltransferase G (237 aa).

S-adenosyl-L-methionine-binding positions include G78, F83, 129–130 (AE), and R148.

This sequence belongs to the methyltransferase superfamily. RNA methyltransferase RsmG family.

It localises to the cytoplasm. Its function is as follows. Specifically methylates the N7 position of a guanine in 16S rRNA. The protein is Ribosomal RNA small subunit methyltransferase G of Streptococcus pyogenes serotype M3 (strain ATCC BAA-595 / MGAS315).